A 144-amino-acid chain; its full sequence is Large ribosomal subunit protein uL11 (144 aa).

It belongs to the universal ribosomal protein uL11 family. In terms of assembly, part of the ribosomal stalk of the 50S ribosomal subunit. Interacts with L10 and the large rRNA to form the base of the stalk. L10 forms an elongated spine to which L12 dimers bind in a sequential fashion forming a multimeric L10(L12)X complex. In terms of processing, one or more lysine residues are methylated.

Its function is as follows. Forms part of the ribosomal stalk which helps the ribosome interact with GTP-bound translation factors. This is Large ribosomal subunit protein uL11 from Saccharopolyspora erythraea (strain ATCC 11635 / DSM 40517 / JCM 4748 / NBRC 13426 / NCIMB 8594 / NRRL 2338).